The sequence spans 185 residues: Large ribosomal subunit protein uL5 (185 aa).

This sequence belongs to the universal ribosomal protein uL5 family. As to quaternary structure, part of the 50S ribosomal subunit; part of the 5S rRNA/L5/L18/L25 subcomplex. Contacts the 5S rRNA and the P site tRNA. Forms a bridge to the 30S subunit in the 70S ribosome.

Its function is as follows. This is one of the proteins that bind and probably mediate the attachment of the 5S RNA into the large ribosomal subunit, where it forms part of the central protuberance. In the 70S ribosome it contacts protein S13 of the 30S subunit (bridge B1b), connecting the 2 subunits; this bridge is implicated in subunit movement. Contacts the P site tRNA; the 5S rRNA and some of its associated proteins might help stabilize positioning of ribosome-bound tRNAs. This chain is Large ribosomal subunit protein uL5, found in Brucella abortus (strain S19).